A 692-amino-acid polypeptide reads, in one-letter code: Polyribonucleotide nucleotidyltransferase (692 aa).

2 residues coordinate Mg(2+): Asp-484 and Asp-490. One can recognise a KH domain in the interval 551-610; the sequence is PRIITIQINPDRIRDVIGPGGKVIRALTEETGATIDIQDNGTVTIASVDGEAGAAAKRRI. The S1 motif domain occupies 620–688; that stretch reads DTIYDGKVAK…RQGKIKLSMK (69 aa).

Belongs to the polyribonucleotide nucleotidyltransferase family. In terms of assembly, component of the RNA degradosome, which is a multiprotein complex involved in RNA processing and mRNA degradation. Mg(2+) serves as cofactor.

It localises to the cytoplasm. The catalysed reaction is RNA(n+1) + phosphate = RNA(n) + a ribonucleoside 5'-diphosphate. Its function is as follows. Involved in mRNA degradation. Catalyzes the phosphorolysis of single-stranded polyribonucleotides processively in the 3'- to 5'-direction. This is Polyribonucleotide nucleotidyltransferase from Acidithiobacillus ferrooxidans (strain ATCC 53993 / BNL-5-31) (Leptospirillum ferrooxidans (ATCC 53993)).